A 269-amino-acid chain; its full sequence is MSCIKMKDNCRNFSLSKWQDTRKPWLILIIVTIGLTCIAHFLFQEYLFMEPCEQCVYIRFDMLVMAIGGMIALINPTNNIIKIFSYSLAFYGIWLGLEHCLTLNHIHEVVHSENPFAGVDGCREIPIYPFNLPLHEWAPSWFLPIGECGMDTPVVPENAYNHLNAFQKFFIGTPPDFENGLYSNGWYLIPSLKFINMAICCLIAFLCCFIVLFAMFIAYVLDKNKPNAKIFALAIVILVLVLKFIGEPKNPNQNIASLNHLNQVVLRYS.

A helical membrane pass occupies residues 25–47; it reads WLILIIVTIGLTCIAHFLFQEYL. The cysteines at positions 52 and 55 are disulfide-linked. The chain crosses the membrane as a helical span at residues 62–81; the sequence is MLVMAIGGMIALINPTNNII. Cysteines 122 and 148 form a disulfide. The next 2 helical transmembrane spans lie at 198 to 220 and 230 to 247; these read AICCLIAFLCCFIVLFAMFIAYV and IFALAIVILVLVLKFIGE.

The protein belongs to the DsbB family. DsbI subfamily. Interacts with DsbL.

Its subcellular location is the cell inner membrane. In terms of biological role, required for disulfide bond formation in some proteins. Part of a redox system composed of DsbI and DsbL that mediates formation of an essential disulfide bond in AssT. The sequence is that of Putative protein-disulfide oxidoreductase DsbI (dsbI) from Campylobacter jejuni subsp. jejuni serotype O:23/36 (strain 81-176).